Here is a 608-residue protein sequence, read N- to C-terminus: MTSTEAGALRRLAPPARRFLAHRKGVLVRLALWSLAESGQAFLVGHAVARSVDEGFLAGDPRRGLLWLGVALVAVLSGARVVRGVFAQLAGVTEPLRDGLVRHAVDRSMARAAPGGPGGTDRAAVSRLTNQVEIARDSFAGLVLTLRSFVFTAAGALLGLLSLHPALLVVVLPPLAAGLALFLVTLRPMAAAQRRALAADEALGEHAASARAALRDLTACGTGPGAERHGADLVADAAAAARTLAGWAAVRTAALGVAGHLPVLALLVAVEWLRGHGVSVGALLGAFTYLVQSLLPALHTLMTALGAAGSRLLVVLDRILGPEPEPEPEPEPEPEPELGSGLEPEPEPASEPESGPSTASASAAAFAVHTAAAPAVELRSVTLSYGVRAEPVLDALDLRVAPGEHLAVVGPSGIGKSTLTRLVAGTLAPSRGEVRVAGRVVTGRPAAELAALRVLVPQDAYVFSGTVGDNLAYLRTDPSPAELDAAVEAFGLAPLVERLGGLDATVRPAELSPGERQLVALVRAYLSPAPLLLLDEATCHLDPASEARAEKALAGRSGTLVVVAHRLSSAVRADRTLVLDGIRAQSGTHAELLGRSPLYRDLTGHWNS.

A run of 5 helical transmembrane segments spans residues 25 to 45 (GVLV…FLVG), 66 to 86 (LWLG…RGVF), 141 to 161 (GLVL…LGLL), 166 to 186 (ALLV…LVTL), and 253 to 273 (AALG…VEWL). In terms of domain architecture, ABC transmembrane type-1 spans 30-296 (LALWSLAESG…FTYLVQSLLP (267 aa)). Positions 321–362 (GPEPEPEPEPEPEPEPELGSGLEPEPEPASEPESGPSTASAS) are disordered. Residues 324-336 (PEPEPEPEPEPEP) show a composition bias toward acidic residues. Low complexity predominate over residues 351 to 362 (EPESGPSTASAS). One can recognise an ABC transporter domain in the interval 376 to 605 (VELRSVTLSY…SPLYRDLTGH (230 aa)). 410 to 417 (GPSGIGKS) lines the ATP pocket.

This sequence belongs to the ABC transporter superfamily.

The protein resides in the cell membrane. In terms of biological role, probably involved in exporting SapB from the cell. Expression of the ram locus (ramA, ramB and ramR) induces rapid aerial mycelium formation in S.lividans. The protein is ABC transporter ATP-binding protein RamB of Streptomyces coelicolor (strain ATCC BAA-471 / A3(2) / M145).